The following is a 284-amino-acid chain: Bifunctional protein FolD (284 aa).

Residues G166–S168 and I232 each bind NADP(+).

Belongs to the tetrahydrofolate dehydrogenase/cyclohydrolase family. In terms of assembly, homodimer.

It carries out the reaction (6R)-5,10-methylene-5,6,7,8-tetrahydrofolate + NADP(+) = (6R)-5,10-methenyltetrahydrofolate + NADPH. It catalyses the reaction (6R)-5,10-methenyltetrahydrofolate + H2O = (6R)-10-formyltetrahydrofolate + H(+). The protein operates within one-carbon metabolism; tetrahydrofolate interconversion. In terms of biological role, catalyzes the oxidation of 5,10-methylenetetrahydrofolate to 5,10-methenyltetrahydrofolate and then the hydrolysis of 5,10-methenyltetrahydrofolate to 10-formyltetrahydrofolate. The sequence is that of Bifunctional protein FolD from Pseudomonas paraeruginosa (strain DSM 24068 / PA7) (Pseudomonas aeruginosa (strain PA7)).